The following is a 111-amino-acid chain: MGVEKTIITQGSGPSPQVGQKVTMEYTGWLQKEDGTKGDQFDTSVGRGDFVVNIGVGQVIKGWDEGVTQMKLGEKATLHISPDYGYGPRGFPGAIPPNSTLIFDVELKKIG.

Residues 1 to 20 (MGVEKTIITQGSGPSPQVGQ) form a disordered region. Residues 7–20 (IITQGSGPSPQVGQ) show a composition bias toward polar residues. Residues 19–111 (GQKVTMEYTG…IFDVELKKIG (93 aa)) enclose the PPIase FKBP-type domain.

It belongs to the FKBP-type PPIase family. FKBP1 subfamily.

The protein localises to the cytoplasm. The enzyme catalyses [protein]-peptidylproline (omega=180) = [protein]-peptidylproline (omega=0). Its activity is regulated as follows. Inhibited by both FK506 and rapamycin. In terms of biological role, PPIases accelerate the folding of proteins. It catalyzes the cis-trans isomerization of proline imidic peptide bonds in oligopeptides. This chain is FK506-binding protein 1 (FPR1), found in Gibberella zeae (strain ATCC MYA-4620 / CBS 123657 / FGSC 9075 / NRRL 31084 / PH-1) (Wheat head blight fungus).